Reading from the N-terminus, the 193-residue chain is Glycerol-3-phosphate acyltransferase (193 aa).

5 consecutive transmembrane segments (helical) span residues 2 to 22, 51 to 71, 78 to 98, 112 to 132, and 154 to 174; these read AFIISIIIAYLLGSLSFAVIV, QAAFYVLLGDAAKGLIAVLIA, GVSLAFVGLVAVLGHLFPVYF, VLLGLSFWIGLFVIATWVIVV, and IIAGRTDYLFPVLIIAILIIW.

This sequence belongs to the PlsY family. As to quaternary structure, probably interacts with PlsX.

The protein localises to the cell inner membrane. It catalyses the reaction an acyl phosphate + sn-glycerol 3-phosphate = a 1-acyl-sn-glycero-3-phosphate + phosphate. Its pathway is lipid metabolism; phospholipid metabolism. Catalyzes the transfer of an acyl group from acyl-phosphate (acyl-PO(4)) to glycerol-3-phosphate (G3P) to form lysophosphatidic acid (LPA). This enzyme utilizes acyl-phosphate as fatty acyl donor, but not acyl-CoA or acyl-ACP. The chain is Glycerol-3-phosphate acyltransferase from Coxiella burnetii (strain CbuK_Q154) (Coxiella burnetii (strain Q154)).